Reading from the N-terminus, the 263-residue chain is Aminoglycoside (3'') (9) adenylyltransferase (263 aa).

The enzyme catalyses streptomycin + ATP = 3''-O-adenylylstreptomycin + diphosphate. The catalysed reaction is spectinomycin + ATP = 9-O-adenylylspectinomycin + diphosphate. Functionally, mediates bacterial resistance to the antibiotics streptomycin and spectinomycin. This is Aminoglycoside (3'') (9) adenylyltransferase from Escherichia coli.